A 154-amino-acid polypeptide reads, in one-letter code: MNIIEGKLNLDSNTKIAIINARFNHIITDRLVEGAKDAFLRHGGKKENLSLILVPGAFELPYALKKAIESEKFDAICCVGAVIRGSTPHFDYVSAETTKGIANVSLNHNIPVSFGVLTTDTIEQAIERAGSKAGNKGFEAMTTVIEMLNLTKEL.

5-amino-6-(D-ribitylamino)uracil-binding positions include Phe-23, 57 to 59 (AFE), and 81 to 83 (AVI). 86–87 (ST) lines the (2S)-2-hydroxy-3-oxobutyl phosphate pocket. The active-site Proton donor is the His-89. Phe-114 is a 5-amino-6-(D-ribitylamino)uracil binding site. Arg-128 serves as a coordination point for (2S)-2-hydroxy-3-oxobutyl phosphate.

Belongs to the DMRL synthase family.

The enzyme catalyses (2S)-2-hydroxy-3-oxobutyl phosphate + 5-amino-6-(D-ribitylamino)uracil = 6,7-dimethyl-8-(1-D-ribityl)lumazine + phosphate + 2 H2O + H(+). It functions in the pathway cofactor biosynthesis; riboflavin biosynthesis; riboflavin from 2-hydroxy-3-oxobutyl phosphate and 5-amino-6-(D-ribitylamino)uracil: step 1/2. Functionally, catalyzes the formation of 6,7-dimethyl-8-ribityllumazine by condensation of 5-amino-6-(D-ribitylamino)uracil with 3,4-dihydroxy-2-butanone 4-phosphate. This is the penultimate step in the biosynthesis of riboflavin. The sequence is that of 6,7-dimethyl-8-ribityllumazine synthase from Campylobacter jejuni subsp. doylei (strain ATCC BAA-1458 / RM4099 / 269.97).